We begin with the raw amino-acid sequence, 338 residues long: Fructose-1,6-bisphosphatase 1 (338 aa).

The residue at position 2 (Ala2) is an N-acetylalanine. AMP contacts are provided by residues 18–22 and 28–32; these read VMEEG and TGEMT. Asp69 and Glu98 together coordinate Mg(2+). 113–114 lines the AMP pocket; sequence KY. Positions 119, 121, and 122 each coordinate Mg(2+). 122-125 is a binding site for substrate; it reads DGSS. Residue Arg141 coordinates AMP. Lys151 is modified (N6-succinyllysine). Substrate-binding positions include 213 to 216, 244 to 249, Tyr265, and 275 to 277; these read NEGY, RYVGSM, and KLR. Phosphotyrosine occurs at positions 216, 245, and 265. Position 281 (Glu281) interacts with Mg(2+).

This sequence belongs to the FBPase class 1 family. Homotetramer. Requires Mg(2+) as cofactor.

The enzyme catalyses beta-D-fructose 1,6-bisphosphate + H2O = beta-D-fructose 6-phosphate + phosphate. The protein operates within carbohydrate biosynthesis; gluconeogenesis. Its activity is regulated as follows. Subject to complex allosteric regulation. The enzyme can assume an active R-state, or an inactive T-state. Intermediate conformations may exist. AMP acts as an allosteric inhibitor. AMP binding affects the turnover of bound substrate and not the affinity for substrate. Fructose 2,6-bisphosphate acts as a competitive inhibitor. Fructose 2,6-bisphosphate and AMP have synergistic effects. Its function is as follows. Catalyzes the hydrolysis of fructose 1,6-bisphosphate to fructose 6-phosphate in the presence of divalent cations, acting as a rate-limiting enzyme in gluconeogenesis. Plays a role in regulating glucose sensing and insulin secretion of pancreatic beta-cells. Appears to modulate glycerol gluconeogenesis in liver. Important regulator of appetite and adiposity; increased expression of the protein in liver after nutrient excess increases circulating satiety hormones and reduces appetite-stimulating neuropeptides and thus seems to provide a feedback mechanism to limit weight gain. The polypeptide is Fructose-1,6-bisphosphatase 1 (FBP1) (Oryctolagus cuniculus (Rabbit)).